Here is a 239-residue protein sequence, read N- to C-terminus: Large ribosomal subunit protein eL32 (239 aa).

Composition is skewed to acidic residues over residues 1–12 (MSDENDTPEELA) and 67–91 (VEAD…ADVE). Disordered regions lie at residues 1–23 (MSDE…SKAE) and 64–178 (GLEV…HPSG). The segment covering 92-113 (TELRARGLTEKTPDLSEDEQRL) has biased composition (basic and acidic residues). The segment covering 130–155 (YHKKKRTPTSWRRPKGTLSKQRRGIK) has biased composition (basic residues).

It belongs to the eukaryotic ribosomal protein eL32 family.

The polypeptide is Large ribosomal subunit protein eL32 (rpl32e) (Halobacterium salinarum (strain ATCC 700922 / JCM 11081 / NRC-1) (Halobacterium halobium)).